A 184-amino-acid polypeptide reads, in one-letter code: ATP synthase subunit b, chloroplastic (184 aa).

The chain crosses the membrane as a helical span at residues 27-49 (LATNPINLSVVLGVLIFFGKGVL).

Belongs to the ATPase B chain family. F-type ATPases have 2 components, F(1) - the catalytic core - and F(0) - the membrane proton channel. F(1) has five subunits: alpha(3), beta(3), gamma(1), delta(1), epsilon(1). F(0) has four main subunits: a(1), b(1), b'(1) and c(10-14). The alpha and beta chains form an alternating ring which encloses part of the gamma chain. F(1) is attached to F(0) by a central stalk formed by the gamma and epsilon chains, while a peripheral stalk is formed by the delta, b and b' chains.

It is found in the plastid. Its subcellular location is the chloroplast thylakoid membrane. In terms of biological role, f(1)F(0) ATP synthase produces ATP from ADP in the presence of a proton or sodium gradient. F-type ATPases consist of two structural domains, F(1) containing the extramembraneous catalytic core and F(0) containing the membrane proton channel, linked together by a central stalk and a peripheral stalk. During catalysis, ATP synthesis in the catalytic domain of F(1) is coupled via a rotary mechanism of the central stalk subunits to proton translocation. Component of the F(0) channel, it forms part of the peripheral stalk, linking F(1) to F(0). In Lepidium virginicum (Virginia pepperweed), this protein is ATP synthase subunit b, chloroplastic.